The chain runs to 365 residues: Flagellar P-ring protein (365 aa).

An N-terminal signal peptide occupies residues 1-22 (MSVRRFLVWILALTVGAAPVMA).

It belongs to the FlgI family. In terms of assembly, the basal body constitutes a major portion of the flagellar organelle and consists of four rings (L,P,S, and M) mounted on a central rod.

It is found in the periplasm. The protein localises to the bacterial flagellum basal body. In terms of biological role, assembles around the rod to form the L-ring and probably protects the motor/basal body from shearing forces during rotation. The protein is Flagellar P-ring protein of Marinobacter nauticus (strain ATCC 700491 / DSM 11845 / VT8) (Marinobacter aquaeolei).